We begin with the raw amino-acid sequence, 944 residues long: Breast cancer type 2 susceptibility protein homolog (944 aa).

Basic and acidic residues-rich tracts occupy residues 325–348 and 415–431; these read KKVK…ESKI and NSIK…ETPN. Disordered regions lie at residues 325–354 and 415–440; these read KKVK…ASCD and NSIK…SSHQ. 3 BRCA2 repeats span residues 543–577, 644–678, and 719–753; these read AEPE…EFQS, NESQ…QSRA, and SETE…EFQA. 2 disordered regions span residues 823–854 and 876–944; these read LCSQ…LDQA and SSTE…RSRY. Polar residues-rich tracts occupy residues 838–852 and 876–885; these read IHSS…SPLD and SSTETSTSCA. The span at 904 to 921 shows a compositional bias: basic and acidic residues; that stretch reads ADRDLNRSKDCAKNRQDA. Positions 932–944 are enriched in basic residues; it reads KKSRRLGLSRSRY.

As to quaternary structure, interacts with Rad9 and spn-A/Rad51.

The protein localises to the nucleus. Its function is as follows. Involved in and required for double-strand break repair by meiotic and mitotic homologous recombination. During meiosis, has a dual role in the repair of meiotic double-stranded breaks and the efficient activation of the meiotic recombination checkpoint. The polypeptide is Breast cancer type 2 susceptibility protein homolog (Drosophila simulans (Fruit fly)).